The primary structure comprises 149 residues: Large ribosomal subunit protein uL13 (149 aa).

It belongs to the universal ribosomal protein uL13 family. In terms of assembly, part of the 50S ribosomal subunit.

In terms of biological role, this protein is one of the early assembly proteins of the 50S ribosomal subunit, although it is not seen to bind rRNA by itself. It is important during the early stages of 50S assembly. This Borrelia recurrentis (strain A1) protein is Large ribosomal subunit protein uL13.